We begin with the raw amino-acid sequence, 214 residues long: ATP phosphoribosyltransferase (214 aa).

Belongs to the ATP phosphoribosyltransferase family. Short subfamily. As to quaternary structure, heteromultimer composed of HisG and HisZ subunits.

The protein localises to the cytoplasm. The enzyme catalyses 1-(5-phospho-beta-D-ribosyl)-ATP + diphosphate = 5-phospho-alpha-D-ribose 1-diphosphate + ATP. It participates in amino-acid biosynthesis; L-histidine biosynthesis; L-histidine from 5-phospho-alpha-D-ribose 1-diphosphate: step 1/9. Catalyzes the condensation of ATP and 5-phosphoribose 1-diphosphate to form N'-(5'-phosphoribosyl)-ATP (PR-ATP). Has a crucial role in the pathway because the rate of histidine biosynthesis seems to be controlled primarily by regulation of HisG enzymatic activity. The chain is ATP phosphoribosyltransferase from Ruminiclostridium cellulolyticum (strain ATCC 35319 / DSM 5812 / JCM 6584 / H10) (Clostridium cellulolyticum).